The following is a 533-amino-acid chain: Probable lipid II flippase MurJ (533 aa).

14 helical membrane-spanning segments follow: residues 11-31, 39-61, 96-116, 135-155, 166-186, 196-216, 253-273, 284-304, 330-350, 360-380, 400-420, 422-442, 452-472, and 493-513; these read LANIAGIVAIATLISKVFGLL, AFGVGTVVTAYAYAYVIPGFLFI, LVSGVLLGVTIILVLGAGIFI, LQIMAPMALLSGLIGIGFGTL, ISPLLSSITVILGLGVAVWQL, WLLGSLLLAGGTTAGAVLQWL, LSSGMLYINFATNLFFASFIP, FVALTPLGIISNMILVPFLPV, LTMFPLTAILVGLAIPIVQVI, AAAEVAPVLAAYGLGMFFYLG, VSLFNIFLNGLLDYLFYKPFG, VGIVMATVGVNLFSMTIFIWM, LGGWAMDLGKLVGVTAIASVA, and ILEVLTMSSIILVVFTVGVAL.

It belongs to the MurJ/MviN family.

It is found in the cell inner membrane. Its pathway is cell wall biogenesis; peptidoglycan biosynthesis. Its function is as follows. Involved in peptidoglycan biosynthesis. Transports lipid-linked peptidoglycan precursors from the inner to the outer leaflet of the cytoplasmic membrane. The sequence is that of Probable lipid II flippase MurJ from Synechocystis sp. (strain ATCC 27184 / PCC 6803 / Kazusa).